The chain runs to 376 residues: Erythronate-4-phosphate dehydrogenase (376 aa).

The substrate site is built by Ser45 and Thr67. Asp147 lines the NAD(+) pocket. Residue Arg209 is part of the active site. Position 233 (Asp233) interacts with NAD(+). Residue Glu238 is part of the active site. His255 functions as the Proton donor in the catalytic mechanism. Gly258 is a binding site for NAD(+). Tyr259 is a binding site for substrate.

It belongs to the D-isomer specific 2-hydroxyacid dehydrogenase family. PdxB subfamily. In terms of assembly, homodimer.

It localises to the cytoplasm. The catalysed reaction is 4-phospho-D-erythronate + NAD(+) = (R)-3-hydroxy-2-oxo-4-phosphooxybutanoate + NADH + H(+). The protein operates within cofactor biosynthesis; pyridoxine 5'-phosphate biosynthesis; pyridoxine 5'-phosphate from D-erythrose 4-phosphate: step 2/5. Its function is as follows. Catalyzes the oxidation of erythronate-4-phosphate to 3-hydroxy-2-oxo-4-phosphonooxybutanoate. This chain is Erythronate-4-phosphate dehydrogenase, found in Shewanella oneidensis (strain ATCC 700550 / JCM 31522 / CIP 106686 / LMG 19005 / NCIMB 14063 / MR-1).